The sequence spans 320 residues: Olfactory receptor 7C1 (320 aa).

Residues 1 to 25 (METGNQTHAQEFLLLGFSATSEIQF) are Extracellular-facing. The N-linked (GlcNAc...) asparagine glycan is linked to asparagine 5. A helical membrane pass occupies residues 26 to 46 (ILFGLFLSMYLVTFTGNLLII). At 47 to 54 (LAICSDSH) the chain is on the cytoplasmic side. Residues 55–75 (LHTPMYFFLSNLSFADLCFTS) form a helical membrane-spanning segment. The Extracellular segment spans residues 76–99 (TTVPKMLLNILTQNKFITYAGCLS). Cysteine 97 and cysteine 189 are oxidised to a cystine. The chain crosses the membrane as a helical span at residues 100–120 (QIFFFTSFGCLDNLLLTVMAY). The Cytoplasmic portion of the chain corresponds to 121–139 (DRFVAVCHPLHYTVIMNPQ). The chain crosses the membrane as a helical span at residues 140–160 (LCGLLVLGSWCISVMGSLLET). Over 161-197 (LTVLRLSFCTEMEIPHFFCDLLEVLKLACSDTFINNV) the chain is Extracellular. The helical transmembrane segment at 198–217 (VIYFATGVLGVISFTGIFFS) threads the bilayer. Residues 218–237 (YYKIVFSILRISSAGRKHKA) lie on the Cytoplasmic side of the membrane. The helical transmembrane segment at 238-258 (FSTCGSHLSVVTLFYGTGFGV) threads the bilayer. Topologically, residues 259–271 (YLSSAATPSSRTS) are extracellular. Residues 272–292 (LVASVMYTMVTPMLNPFIYSL) form a helical membrane-spanning segment. The Cytoplasmic portion of the chain corresponds to 293 to 313 (RNTDMKRALGRLLSRATFFNG).

The protein belongs to the G-protein coupled receptor 1 family.

The protein resides in the cell membrane. Its function is as follows. Odorant receptor. The polypeptide is Olfactory receptor 7C1 (OR7C1) (Homo sapiens (Human)).